We begin with the raw amino-acid sequence, 67 residues long: DNA-directed RNA polymerase subunit omega (67 aa).

It belongs to the RNA polymerase subunit omega family. In terms of assembly, the RNAP catalytic core consists of 2 alpha, 1 beta, 1 beta' and 1 omega subunit. When a sigma factor is associated with the core the holoenzyme is formed, which can initiate transcription.

The catalysed reaction is RNA(n) + a ribonucleoside 5'-triphosphate = RNA(n+1) + diphosphate. Its function is as follows. Promotes RNA polymerase assembly. Latches the N- and C-terminal regions of the beta' subunit thereby facilitating its interaction with the beta and alpha subunits. This Treponema pallidum (strain Nichols) protein is DNA-directed RNA polymerase subunit omega (rpoZ).